The primary structure comprises 380 residues: Putative 8-amino-7-oxononanoate synthase (380 aa).

R18 lines the substrate pocket. 106 to 107 (GY) is a binding site for pyridoxal 5'-phosphate. Residue H131 coordinates substrate. Residues S179, 205–208 (DEAH), and 236–239 (TFGK) each bind pyridoxal 5'-phosphate. K239 carries the post-translational modification N6-(pyridoxal phosphate)lysine. T352 is a substrate binding site.

This sequence belongs to the class-II pyridoxal-phosphate-dependent aminotransferase family. BioF subfamily. In terms of assembly, homodimer. The cofactor is pyridoxal 5'-phosphate.

The catalysed reaction is 6-carboxyhexanoyl-[ACP] + L-alanine + H(+) = (8S)-8-amino-7-oxononanoate + holo-[ACP] + CO2. It functions in the pathway cofactor biosynthesis; biotin biosynthesis. In terms of biological role, catalyzes the decarboxylative condensation of pimeloyl-[acyl-carrier protein] and L-alanine to produce 8-amino-7-oxononanoate (AON), [acyl-carrier protein], and carbon dioxide. The sequence is that of Putative 8-amino-7-oxononanoate synthase (bioF) from Neisseria meningitidis serogroup C (strain 053442).